The sequence spans 238 residues: CFA/I fimbrial subunit A (238 aa).

The signal sequence occupies residues 1 to 19 (MHKLFYLLSLLMAPFVANA).

The protein localises to the fimbrium. Might function as a shuttle protein in the transport of fimbria through the periplasmic space or might function as an adhesin. The chain is CFA/I fimbrial subunit A (cfaA) from Escherichia coli.